The following is a 61-amino-acid chain: Small ribosomal subunit protein uS14 (61 aa).

Zn(2+) contacts are provided by Cys-24, Cys-27, Cys-40, and Cys-43.

Belongs to the universal ribosomal protein uS14 family. Zinc-binding uS14 subfamily. In terms of assembly, part of the 30S ribosomal subunit. Contacts proteins S3 and S10. Requires Zn(2+) as cofactor.

Functionally, binds 16S rRNA, required for the assembly of 30S particles and may also be responsible for determining the conformation of the 16S rRNA at the A site. The sequence is that of Small ribosomal subunit protein uS14 from Geobacillus stearothermophilus (Bacillus stearothermophilus).